We begin with the raw amino-acid sequence, 686 residues long: Zinc finger protein 7 (686 aa).

The KRAB domain occupies 4-76 (VTFGDVAVHF…DLQGAEGTEA (73 aa)). Residues Lys-81 and Lys-101 each participate in a glycyl lysine isopeptide (Lys-Gly) (interchain with G-Cter in SUMO2) cross-link. Residues Ser-126 and Ser-138 each carry the phosphoserine modification. C2H2-type zinc fingers lie at residues 223–245 (SRCQ…NNCH), 250–272 (YECA…QRIH), 278–300 (FKCT…QRIH), 306–328 (YRCE…QRIH), 334–356 (YGCR…QRTH), and 362–384 (YPCK…QRMH). Glycyl lysine isopeptide (Lys-Gly) (interchain with G-Cter in SUMO2) cross-links involve residues Lys-279 and Lys-292. Residue Lys-393 forms a Glycyl lysine isopeptide (Lys-Gly) (interchain with G-Cter in SUMO2) linkage. 9 C2H2-type zinc fingers span residues 413–435 (FKCD…QLIH), 441–463 (YKCN…QRTH), 469–491 (FKCD…QRIH), 497–519 (YVCN…QRIH), 525–547 (YECL…QRVH), 553–575 (YKCN…QIIH), 581–603 (YECS…QRIH), 634–656 (HQCE…QRIH), and 662–684 (YKCN…QKIH).

Belongs to the krueppel C2H2-type zinc-finger protein family.

Its subcellular location is the nucleus. In terms of biological role, may be involved in transcriptional regulation. The chain is Zinc finger protein 7 (ZNF7) from Pongo abelii (Sumatran orangutan).